The sequence spans 599 residues: Putative sensor histidine kinase NtrY-like (599 aa).

A run of 4 helical transmembrane segments spans residues 17–37 (VLIFTLAIAAIIFACATFYVI), 44–64 (FSTIIGFLLVDLAIFLILGVL), 85–105 (IVIAFSLVAAIPTIIVSVFSV), and 285–305 (IMFIFIALLLLFVAISFGVIF). An HAMP domain is found at 307-361 (AKIVKPIKKLVTATDKVKDGDLTVQVPENEVDKDEIGTLYAAFNRMIKQLSRQQR). Residues 378 to 589 (KVAHEIKNPL…IIDIKFDLKK (212 aa)) enclose the Histidine kinase domain. Position 381 is a phosphohistidine; by autocatalysis (histidine 381).

The protein localises to the cell membrane. It carries out the reaction ATP + protein L-histidine = ADP + protein N-phospho-L-histidine.. Its function is as follows. Member of the two-component regulatory system RF_0427/RF_0895. The chain is Putative sensor histidine kinase NtrY-like from Rickettsia felis (strain ATCC VR-1525 / URRWXCal2) (Rickettsia azadi).